The sequence spans 435 residues: 3-ketoacyl-CoA thiolase (435 aa).

Residue C98 is the Acyl-thioester intermediate of the active site. Residues H391 and C421 each act as proton acceptor in the active site.

It belongs to the thiolase-like superfamily. Thiolase family. As to quaternary structure, heterotetramer of two alpha chains (FadJ) and two beta chains (FadI).

It localises to the cytoplasm. It carries out the reaction an acyl-CoA + acetyl-CoA = a 3-oxoacyl-CoA + CoA. It participates in lipid metabolism; fatty acid beta-oxidation. In terms of biological role, catalyzes the final step of fatty acid oxidation in which acetyl-CoA is released and the CoA ester of a fatty acid two carbons shorter is formed. The protein is 3-ketoacyl-CoA thiolase of Vibrio vulnificus (strain CMCP6).